The primary structure comprises 250 residues: DNA repair protein RecO (250 aa).

It belongs to the RecO family.

In terms of biological role, involved in DNA repair and RecF pathway recombination. The chain is DNA repair protein RecO from Rhodopseudomonas palustris (strain TIE-1).